We begin with the raw amino-acid sequence, 292 residues long: ATP synthase gamma chain (292 aa).

This sequence belongs to the ATPase gamma chain family. F-type ATPases have 2 components, CF(1) - the catalytic core - and CF(0) - the membrane proton channel. CF(1) has five subunits: alpha(3), beta(3), gamma(1), delta(1), epsilon(1). CF(0) has three main subunits: a, b and c.

The protein resides in the cell inner membrane. Functionally, produces ATP from ADP in the presence of a proton gradient across the membrane. The gamma chain is believed to be important in regulating ATPase activity and the flow of protons through the CF(0) complex. The polypeptide is ATP synthase gamma chain (Nitrobacter winogradskyi (strain ATCC 25391 / DSM 10237 / CIP 104748 / NCIMB 11846 / Nb-255)).